Reading from the N-terminus, the 464-residue chain is Aspartyl protease 37 (464 aa).

An N-terminal signal peptide occupies residues 1 to 19; that stretch reads MNAAVLLLLLALAALPASC. N-linked (GlcNAc...) asparagine glycosylation occurs at Asn41. The region spanning 89-456 is the Peptidase A1 domain; that stretch reads YLVKLGIGTP…NLRRGRVTFV (368 aa). Asp107 is an active-site residue. Cys117 and Cys123 are disulfide-bonded. Asn174 and Asn261 each carry an N-linked (GlcNAc...) asparagine glycan. Positions 299–311 are enriched in low complexity; it reads TTTTTATATATAP. The segment at 299–319 is disordered; sequence TTTTTATATATAPAPAPTPSP. The N-linked (GlcNAc...) asparagine glycan is linked to Asn320. Asp337 is an active-site residue. Cys376 and Cys420 are joined by a disulfide.

This sequence belongs to the peptidase A1 family.

In terms of biological role, anther-specific aspartic protease involved in tapetal programmed cell death (PCD). Directly regulated by the transcription factor EAT1/DTD in anthers during tapetum PCD and degeneration. The sequence is that of Aspartyl protease 37 from Oryza sativa subsp. japonica (Rice).